Here is a 210-residue protein sequence, read N- to C-terminus: Glutathione S-transferase 4 (210 aa).

Positions 1 to 80 (MDFYYLPLSA…YLVEKYGKQD (80 aa)) constitute a GST N-terminal domain. Glutathione is bound by residues Ser9, 50-52 (HTI), and 64-66 (ESR). One can recognise a GST C-terminal domain in the interval 87–208 (CPKKRALINQ…AGALEMKTLI (122 aa)).

The protein belongs to the GST superfamily. Theta family. In terms of assembly, homodimer.

The enzyme catalyses RX + glutathione = an S-substituted glutathione + a halide anion + H(+). Its function is as follows. Conjugation of reduced glutathione to a wide number of exogenous and endogenous hydrophobic electrophiles. This Musca domestica (House fly) protein is Glutathione S-transferase 4 (Gst4).